Reading from the N-terminus, the 96-residue chain is YcgL domain-containing protein Csal_1462 (96 aa).

The YcgL domain maps to 4–88; that stretch reads RLCEIFKSPR…ARESYLLDLY (85 aa).

This chain is YcgL domain-containing protein Csal_1462, found in Chromohalobacter salexigens (strain ATCC BAA-138 / DSM 3043 / CIP 106854 / NCIMB 13768 / 1H11).